A 246-amino-acid polypeptide reads, in one-letter code: 1-(5-phosphoribosyl)-5-[(5-phosphoribosylamino)methylideneamino] imidazole-4-carboxamide isomerase (246 aa).

The active-site Proton acceptor is Asp8. Catalysis depends on Asp129, which acts as the Proton donor.

It belongs to the HisA/HisF family.

It is found in the cytoplasm. It catalyses the reaction 1-(5-phospho-beta-D-ribosyl)-5-[(5-phospho-beta-D-ribosylamino)methylideneamino]imidazole-4-carboxamide = 5-[(5-phospho-1-deoxy-D-ribulos-1-ylimino)methylamino]-1-(5-phospho-beta-D-ribosyl)imidazole-4-carboxamide. It participates in amino-acid biosynthesis; L-histidine biosynthesis; L-histidine from 5-phospho-alpha-D-ribose 1-diphosphate: step 4/9. The chain is 1-(5-phosphoribosyl)-5-[(5-phosphoribosylamino)methylideneamino] imidazole-4-carboxamide isomerase from Desulforamulus reducens (strain ATCC BAA-1160 / DSM 100696 / MI-1) (Desulfotomaculum reducens).